The primary structure comprises 704 residues: Probable serine/threonine-protein kinase WNK1 (704 aa).

The 258-residue stretch at 27 to 284 folds into the Protein kinase domain; the sequence is GRYNDVLGKG…ARELLKDPFL (258 aa). ATP-binding positions include 107–110 and Lys-157; that span reads TEMF. Asp-174 serves as the catalytic Proton acceptor. The disordered stretch occupies residues 499–521; it reads QTDLQDSGGSSDDGGGQTQHVKD.

The protein belongs to the protein kinase superfamily. Ser/Thr protein kinase family. WNK subfamily.

The enzyme catalyses L-seryl-[protein] + ATP = O-phospho-L-seryl-[protein] + ADP + H(+). It catalyses the reaction L-threonyl-[protein] + ATP = O-phospho-L-threonyl-[protein] + ADP + H(+). This chain is Probable serine/threonine-protein kinase WNK1 (WNK1), found in Oryza sativa subsp. japonica (Rice).